The following is a 146-amino-acid chain: Large ribosomal subunit protein uL15 (146 aa).

The tract at residues 1 to 65 (MSDIQLNTLK…GQMPLQRRLP (65 aa)) is disordered. Positions 24-34 (RGIGSGLGKTA) are enriched in gly residues.

It belongs to the universal ribosomal protein uL15 family. As to quaternary structure, part of the 50S ribosomal subunit.

In terms of biological role, binds to the 23S rRNA. The chain is Large ribosomal subunit protein uL15 from Bordetella petrii (strain ATCC BAA-461 / DSM 12804 / CCUG 43448).